A 286-amino-acid polypeptide reads, in one-letter code: Probable protein S-acyltransferase 16 (286 aa).

Helical transmembrane passes span 11-31 (PVTV…FTFI) and 45-65 (NAAA…IAVF). In terms of domain architecture, DHHC spans 97–147 (RYCQKCSHFKPPRAHHCRVCKRCVLRMDHHCIWINNCVGHTNYKVFFVFVV). The active-site S-palmitoyl cysteine intermediate is the Cys127. Helical transmembrane passes span 141–161 (VFFV…VLLV) and 182–202 (IYVI…VLLG).

Belongs to the DHHC palmitoyltransferase family.

It is found in the golgi apparatus membrane. The catalysed reaction is L-cysteinyl-[protein] + hexadecanoyl-CoA = S-hexadecanoyl-L-cysteinyl-[protein] + CoA. Its function is as follows. Palmitoyl acyltransferase. In Arabidopsis thaliana (Mouse-ear cress), this protein is Probable protein S-acyltransferase 16 (PAT16).